Reading from the N-terminus, the 193-residue chain is Ribosomal RNA large subunit methyltransferase E (193 aa).

5 residues coordinate S-adenosyl-L-methionine: Gly-48, Phe-50, Asp-67, Asn-85, and Asp-107. The Proton acceptor role is filled by Lys-147.

It belongs to the class I-like SAM-binding methyltransferase superfamily. RNA methyltransferase RlmE family.

The protein localises to the cytoplasm. It catalyses the reaction uridine(2552) in 23S rRNA + S-adenosyl-L-methionine = 2'-O-methyluridine(2552) in 23S rRNA + S-adenosyl-L-homocysteine + H(+). Specifically methylates the uridine in position 2552 of 23S rRNA at the 2'-O position of the ribose in the fully assembled 50S ribosomal subunit. The sequence is that of Ribosomal RNA large subunit methyltransferase E from Borrelia duttonii (strain Ly).